Consider the following 94-residue polypeptide: Large ribosomal subunit protein uL23 (94 aa).

Belongs to the universal ribosomal protein uL23 family. In terms of assembly, part of the 50S ribosomal subunit. Contacts protein L29, and trigger factor when it is bound to the ribosome.

Its function is as follows. One of the early assembly proteins it binds 23S rRNA. One of the proteins that surrounds the polypeptide exit tunnel on the outside of the ribosome. Forms the main docking site for trigger factor binding to the ribosome. The protein is Large ribosomal subunit protein uL23 of Geobacter sp. (strain M21).